Consider the following 599-residue polypeptide: DNA-directed RNA polymerase III subunit RPC3 (599 aa).

Positions proline 350–isoleucine 375 are disordered. Residues aspartate 359–glutamate 370 show a composition bias toward basic and acidic residues. The leucine-zipper stretch occupies residues leucine 528–leucine 549.

This sequence belongs to the RNA polymerase beta chain family. As to quaternary structure, component of the RNA polymerase III (Pol III) complex consisting of 17 subunits.

It localises to the nucleus. In terms of biological role, DNA-dependent RNA polymerase catalyzes the transcription of DNA into RNA using the four ribonucleoside triphosphates as substrates. Specific core component of RNA polymerase III which synthesizes small RNAs, such as 5S rRNA and tRNAs. This chain is DNA-directed RNA polymerase III subunit RPC3 (RPC82), found in Scheffersomyces stipitis (strain ATCC 58785 / CBS 6054 / NBRC 10063 / NRRL Y-11545) (Yeast).